The following is a 319-amino-acid chain: Fiber protein (319 aa).

2 Shaft repeats span residues 44–73 (GVLSLKCVNPLTTASGSLQLKVGSGLTVDT) and 82–103 (IKVNTPLTKSNHSINLPIGNGL).

It belongs to the adenoviridae fiber family. As to quaternary structure, homotrimer. Interacts with host receptor CD46. Interacts (via N-terminal tail region) with pentons.

The protein resides in the virion. The protein localises to the host nucleus. Functionally, forms spikes that protrude from each vertex of the icosahedral capsid. Interacts with host receptor CD46 to provide virion initial attachment to target cell. Fiber proteins are shed during virus entry, when virus is still at the cell surface. Heparan sulfate might also play a role in virus binding. The sequence is that of Fiber protein from Homo sapiens (Human).